We begin with the raw amino-acid sequence, 458 residues long: Phosphoglucosamine mutase (458 aa).

Ser100 acts as the Phosphoserine intermediate in catalysis. Residues Ser100, Asp239, Asp241, and Asp243 each contribute to the Mg(2+) site. The residue at position 100 (Ser100) is a Phosphoserine.

This sequence belongs to the phosphohexose mutase family. It depends on Mg(2+) as a cofactor. Post-translationally, activated by phosphorylation.

It catalyses the reaction alpha-D-glucosamine 1-phosphate = D-glucosamine 6-phosphate. Catalyzes the conversion of glucosamine-6-phosphate to glucosamine-1-phosphate. The sequence is that of Phosphoglucosamine mutase from Dictyoglomus thermophilum (strain ATCC 35947 / DSM 3960 / H-6-12).